The chain runs to 1117 residues: Centrosomal protein of 126 kDa (1117 aa).

Residues 1–42 (MLAGRPGTRSAVGELGTESSDNLDRAPLGPRESGGHHRPGSY) are disordered. A coiled-coil region spans residues 49-121 (LEKNLEEERQ…EEVTEKFQRA (73 aa)). Disordered stretches follow at residues 643 to 664 (AENS…QQFH) and 730 to 759 (KKEE…IIRK). Over residues 730 to 744 (KKEESKIPVHDDSKT) the composition is skewed to basic and acidic residues. Positions 745–758 (KQGKPQRGRAKIIR) are enriched in basic residues.

As to quaternary structure, interacts with DCTN1. As to expression, expressed in brain, lung, skeletal muscle, kidney, pancreas, testis and ovary.

Its subcellular location is the midbody. The protein localises to the cytoplasm. It is found in the cytoskeleton. The protein resides in the microtubule organizing center. It localises to the centrosome. Its subcellular location is the cilium basal body. Functionally, participates in cytokinesis. Necessary for microtubules and mitotic spindle organization. Involved in primary cilium formation. The protein is Centrosomal protein of 126 kDa of Homo sapiens (Human).